A 125-amino-acid polypeptide reads, in one-letter code: Probable 4-amino-4-deoxy-L-arabinose-phosphoundecaprenol flippase subunit ArnF (125 aa).

Residues 1–2 lie on the Cytoplasmic side of the membrane; the sequence is MG. Residues 3 to 23 traverse the membrane as a helical segment; it reads VMWGLISVAIASLAQLSLGFA. Residues 24–33 lie on the Periplasmic side of the membrane; it reads MMRLPSIAHP. The helical transmembrane segment at 34 to 54 threads the bilayer; that stretch reads LAFISGLGALNAATLALFAGL. Topologically, residues 55–76 are cytoplasmic; that stretch reads AGYLVSVFCWHKTLHTLALSKA. A helical membrane pass occupies residues 77–97; the sequence is YALLSLSYVLVWVASMLLPGL. Residues 98 to 100 lie on the Periplasmic side of the membrane; the sequence is QGA. A helical transmembrane segment spans residues 101 to 121; the sequence is FSLKAMLGVLCIMAGVMLIFL. At 122-125 the chain is on the cytoplasmic side; it reads PARS.

The protein belongs to the ArnF family. In terms of assembly, heterodimer of ArnE and ArnF.

It is found in the cell inner membrane. The protein operates within bacterial outer membrane biogenesis; lipopolysaccharide biosynthesis. Translocates 4-amino-4-deoxy-L-arabinose-phosphoundecaprenol (alpha-L-Ara4N-phosphoundecaprenol) from the cytoplasmic to the periplasmic side of the inner membrane. This Salmonella agona (strain SL483) protein is Probable 4-amino-4-deoxy-L-arabinose-phosphoundecaprenol flippase subunit ArnF.